The sequence spans 75 residues: Sperm-specific protein PL-I (75 aa).

Residues 2–74 (GSSGMMSMVA…GSAGWVLVPK (73 aa)) enclose the H15 domain.

It belongs to the histone H1/H5 family. In terms of tissue distribution, sperm.

Its subcellular location is the nucleus. It is found in the chromosome. Its function is as follows. Linker histones are implicated in chromatin remodeling and/or transcriptional regulation during spermiogenesis, the process of spermatid maturation into spermatozoa. The protein is Sperm-specific protein PL-I of Spisula solidissima (Atlantic surf-clam).